Reading from the N-terminus, the 376-residue chain is Probable dual-specificity RNA methyltransferase RlmN (376 aa).

Glu96 serves as the catalytic Proton acceptor. Residues Tyr102–Glu346 enclose the Radical SAM core domain. Cys109 and Cys351 are joined by a disulfide. 3 residues coordinate [4Fe-4S] cluster: Cys116, Cys120, and Cys123. S-adenosyl-L-methionine contacts are provided by residues Gly171–Glu172, Ser203, Ser226–His228, and Asn308. Residue Cys351 is the S-methylcysteine intermediate of the active site.

It belongs to the radical SAM superfamily. RlmN family. [4Fe-4S] cluster serves as cofactor.

The protein localises to the cytoplasm. The catalysed reaction is adenosine(2503) in 23S rRNA + 2 reduced [2Fe-2S]-[ferredoxin] + 2 S-adenosyl-L-methionine = 2-methyladenosine(2503) in 23S rRNA + 5'-deoxyadenosine + L-methionine + 2 oxidized [2Fe-2S]-[ferredoxin] + S-adenosyl-L-homocysteine. The enzyme catalyses adenosine(37) in tRNA + 2 reduced [2Fe-2S]-[ferredoxin] + 2 S-adenosyl-L-methionine = 2-methyladenosine(37) in tRNA + 5'-deoxyadenosine + L-methionine + 2 oxidized [2Fe-2S]-[ferredoxin] + S-adenosyl-L-homocysteine. Functionally, specifically methylates position 2 of adenine 2503 in 23S rRNA and position 2 of adenine 37 in tRNAs. The protein is Probable dual-specificity RNA methyltransferase RlmN of Chloroflexus aurantiacus (strain ATCC 29366 / DSM 635 / J-10-fl).